The sequence spans 324 residues: HTH-type transcriptional regulator GlxA (324 aa).

Residues 223-321 form the HTH araC/xylS-type domain; the sequence is LAVLEKMETA…SQTPGSLRRR (99 aa). 2 DNA-binding regions (H-T-H motif) span residues 240 to 261 and 288 to 311; these read TAMA…REHR and IPEI…KRLF.

The polypeptide is HTH-type transcriptional regulator GlxA (glxA) (Rhizobium meliloti (strain 1021) (Ensifer meliloti)).